The following is a 653-amino-acid chain: ATP-dependent zinc metalloprotease FtsH 1 (653 aa).

The interval M1–K20 is disordered. The Cytoplasmic portion of the chain corresponds to M1 to N30. The helical transmembrane segment at I31 to W51 threads the bilayer. At E52–W126 the chain is on the periplasmic side. Residues W127–L147 form a helical membrane-spanning segment. At Y148–V653 the chain is on the cytoplasmic side. G219–T226 contacts ATP. H441 contacts Zn(2+). The active site involves E442. Positions 445 and 518 each coordinate Zn(2+).

This sequence in the central section; belongs to the AAA ATPase family. The protein in the C-terminal section; belongs to the peptidase M41 family. In terms of assembly, homohexamer. The cofactor is Zn(2+).

It is found in the cell inner membrane. Functionally, acts as a processive, ATP-dependent zinc metallopeptidase for both cytoplasmic and membrane proteins. Plays a role in the quality control of integral membrane proteins. The sequence is that of ATP-dependent zinc metalloprotease FtsH 1 from Petrotoga mobilis (strain DSM 10674 / SJ95).